Here is an 84-residue protein sequence, read N- to C-terminus: Cell division topological specificity factor (84 aa).

Belongs to the MinE family.

Functionally, prevents the cell division inhibition by proteins MinC and MinD at internal division sites while permitting inhibition at polar sites. This ensures cell division at the proper site by restricting the formation of a division septum at the midpoint of the long axis of the cell. The protein is Cell division topological specificity factor of Pseudomonas putida (strain ATCC 700007 / DSM 6899 / JCM 31910 / BCRC 17059 / LMG 24140 / F1).